The sequence spans 413 residues: ORC1-type DNA replication protein 10 (413 aa).

ATP is bound by residues 63-67 (VGKTA), Tyr211, and Arg223.

This sequence belongs to the CDC6/cdc18 family.

In terms of biological role, involved in regulation of DNA replication. This is ORC1-type DNA replication protein 10 (orc10) from Halobacterium salinarum (strain ATCC 700922 / JCM 11081 / NRC-1) (Halobacterium halobium).